A 196-amino-acid polypeptide reads, in one-letter code: Probable malonic semialdehyde reductase RutE (196 aa).

The protein belongs to the nitroreductase family. HadB/RutE subfamily. It depends on FMN as a cofactor.

It carries out the reaction 3-hydroxypropanoate + NADP(+) = 3-oxopropanoate + NADPH + H(+). Functionally, may reduce toxic product malonic semialdehyde to 3-hydroxypropionic acid, which is excreted. The polypeptide is Probable malonic semialdehyde reductase RutE (Yersinia enterocolitica serotype O:8 / biotype 1B (strain NCTC 13174 / 8081)).